Here is a 144-residue protein sequence, read N- to C-terminus: Large ribosomal subunit protein uL11 (144 aa).

The protein belongs to the universal ribosomal protein uL11 family. As to quaternary structure, part of the ribosomal stalk of the 50S ribosomal subunit. Interacts with L10 and the large rRNA to form the base of the stalk. L10 forms an elongated spine to which L12 dimers bind in a sequential fashion forming a multimeric L10(L12)X complex. In terms of processing, one or more lysine residues are methylated.

Forms part of the ribosomal stalk which helps the ribosome interact with GTP-bound translation factors. The protein is Large ribosomal subunit protein uL11 of Polaromonas naphthalenivorans (strain CJ2).